A 24-amino-acid chain; its full sequence is Flavin reductase (NADPH) (24 aa).

NADP(+) contacts are provided by Gly9, Thr11, Gly12, and Thr14.

This sequence belongs to the BLVRB family. As to quaternary structure, monomer. Detected in erythrocytes (at protein level).

It localises to the cytoplasm. It catalyses the reaction reduced riboflavin + NADP(+) = riboflavin + NADPH + 2 H(+). It carries out the reaction bilirubin IXbeta + NADP(+) = biliverdin IXbeta + NADPH + H(+). The enzyme catalyses FMNH2 + NAD(+) = FMN + NADH + 2 H(+). The catalysed reaction is FMNH2 + NADP(+) = FMN + NADPH + 2 H(+). It catalyses the reaction S-nitroso-CoA + L-cysteinyl-[protein] = S-nitroso-L-cysteinyl-[protein] + CoA. It carries out the reaction L-cysteinyl-[SCAN] + S-nitroso-CoA = S-nitroso-L-cysteinyl-[SCAN] + CoA. The enzyme catalyses S-nitroso-L-cysteinyl-[SCAN] + L-cysteinyl-[protein] = L-cysteinyl-[SCAN] + S-nitroso-L-cysteinyl-[protein]. In terms of biological role, enzyme that can both act as a NAD(P)H-dependent reductase and a S-nitroso-CoA-dependent nitrosyltransferase. Promotes fetal heme degradation during development. Also expressed in adult tissues, where it acts as a regulator of hematopoiesis, intermediary metabolism (glutaminolysis, glycolysis, TCA cycle and pentose phosphate pathway) and insulin signaling. Has a broad specificity oxidoreductase activity by catalyzing the NAD(P)H-dependent reduction of a variety of flavins, such as riboflavin, FAD or FMN, biliverdins, methemoglobin and PQQ (pyrroloquinoline quinone). Contributes to fetal heme catabolism by catalyzing reduction of biliverdin IXbeta into bilirubin IXbeta in the liver. Biliverdin IXbeta, which constitutes the major heme catabolite in the fetus is not present in adult. Does not reduce bilirubin IXalpha. Can also reduce the complexed Fe(3+) iron to Fe(2+) in the presence of FMN and NADPH. Acts as a protein nitrosyltransferase by catalyzing nitrosylation of cysteine residues of target proteins, such as HMOX2, INSR and IRS1. S-nitroso-CoA-dependent nitrosyltransferase activity is mediated via a 'ping-pong' mechanism: BLVRB first associates with both S-nitroso-CoA and protein substrate, nitric oxide group is then transferred from S-nitroso-CoA to Cys residues of BLVRB and from S-nitroso-BLVRB to the protein substrate. Inhibits insulin signaling by mediating nitrosylation of INSR and IRS1, leading to their inhibition. The chain is Flavin reductase (NADPH) (BLVRB) from Aquarana catesbeiana (American bullfrog).